The sequence spans 130 residues: Fluoride-specific ion channel FluC (130 aa).

The next 4 membrane-spanning stretches (helical) occupy residues 3 to 23 (FVFLWAALGGAIGSSLRYFVG), 38 to 58 (LGTFSVNIIGCFVIGFMGHLA), 67 to 87 (FGIFFVTGVLGGFTTFSSYGL), and 102 to 122 (ISYVLGTNLLGLIGVAIGWFL). Na(+)-binding residues include Gly77 and Thr80.

The protein belongs to the fluoride channel Fluc/FEX (TC 1.A.43) family.

Its subcellular location is the cell inner membrane. It carries out the reaction fluoride(in) = fluoride(out). With respect to regulation, na(+) is not transported, but it plays an essential structural role and its presence is essential for fluoride channel function. Functionally, fluoride-specific ion channel. Important for reducing fluoride concentration in the cell, thus reducing its toxicity. The sequence is that of Fluoride-specific ion channel FluC from Helicobacter pylori (strain G27).